The following is a 445-amino-acid chain: UPF0761 membrane protein Mlg_0521 (445 aa).

6 consecutive transmembrane segments (helical) span residues 56-76 (LLALVPLLTIGLSIFAAFPVF), 112-132 (GLTVVGLLALMVSALLMMAAI), 152-172 (FMVYWTVLTLAPILMGASLGI), 195-215 (LLAGMPFVAETVAFTFLYAAV), 225-245 (ALLGGLLAAALFEAAKGGFGW), and 259-279 (ALAALPIFLIWLYLSWVVVLV).

It belongs to the UPF0761 family.

It localises to the cell inner membrane. The protein is UPF0761 membrane protein Mlg_0521 of Alkalilimnicola ehrlichii (strain ATCC BAA-1101 / DSM 17681 / MLHE-1).